Reading from the N-terminus, the 658-residue chain is UvrABC system protein B (658 aa).

Residues 26-414 (AGLKKGLKHQ…PDVIEQIIRP (389 aa)) form the Helicase ATP-binding domain. 39–46 (GATGTGKT) contacts ATP. Positions 92–115 (YYDYYQPEAYVPQSDTYIEKDASI) match the Beta-hairpin motif. In terms of domain architecture, Helicase C-terminal spans 430–592 (QIDDLMDEIN…ITPKTIKKEI (163 aa)). One can recognise a UVR domain in the interval 622–658 (DVFIEGMEHEMKEAAKALDFERAAELRDALLEIKAEG).

This sequence belongs to the UvrB family. As to quaternary structure, forms a heterotetramer with UvrA during the search for lesions. Interacts with UvrC in an incision complex.

The protein localises to the cytoplasm. Functionally, the UvrABC repair system catalyzes the recognition and processing of DNA lesions. A damage recognition complex composed of 2 UvrA and 2 UvrB subunits scans DNA for abnormalities. Upon binding of the UvrA(2)B(2) complex to a putative damaged site, the DNA wraps around one UvrB monomer. DNA wrap is dependent on ATP binding by UvrB and probably causes local melting of the DNA helix, facilitating insertion of UvrB beta-hairpin between the DNA strands. Then UvrB probes one DNA strand for the presence of a lesion. If a lesion is found the UvrA subunits dissociate and the UvrB-DNA preincision complex is formed. This complex is subsequently bound by UvrC and the second UvrB is released. If no lesion is found, the DNA wraps around the other UvrB subunit that will check the other stand for damage. This is UvrABC system protein B from Listeria monocytogenes serovar 1/2a (strain ATCC BAA-679 / EGD-e).